The chain runs to 263 residues: Small ribosomal subunit protein eS4 (263 aa).

Residues 42–104 (LPLIIFLRNK…TGENFRLIYD (63 aa)) enclose the S4 RNA-binding domain. A Glycyl lysine isopeptide (Lys-Gly) (interchain with G-Cter in SUMO2) cross-link involves residue K230. At K233 the chain carries N6-acetyllysine.

It belongs to the eukaryotic ribosomal protein eS4 family. Component of the small ribosomal subunit. Part of the small subunit (SSU) processome, composed of more than 70 proteins and the RNA chaperone small nucleolar RNA (snoRNA) U3. Identified in a IGF2BP1-dependent mRNP granule complex containing untranslated mRNAs.

It localises to the cytoplasm. It is found in the nucleus. The protein localises to the nucleolus. Its function is as follows. Component of the small ribosomal subunit. The ribosome is a large ribonucleoprotein complex responsible for the synthesis of proteins in the cell. Part of the small subunit (SSU) processome, first precursor of the small eukaryotic ribosomal subunit. During the assembly of the SSU processome in the nucleolus, many ribosome biogenesis factors, an RNA chaperone and ribosomal proteins associate with the nascent pre-rRNA and work in concert to generate RNA folding, modifications, rearrangements and cleavage as well as targeted degradation of pre-ribosomal RNA by the RNA exosome. The sequence is that of Small ribosomal subunit protein eS4 (RPS4X) from Oryctolagus cuniculus (Rabbit).